An 88-amino-acid polypeptide reads, in one-letter code: Cell division topological specificity factor (88 aa).

This sequence belongs to the MinE family.

Functionally, prevents the cell division inhibition by proteins MinC and MinD at internal division sites while permitting inhibition at polar sites. This ensures cell division at the proper site by restricting the formation of a division septum at the midpoint of the long axis of the cell. This Cronobacter sakazakii (strain ATCC BAA-894) (Enterobacter sakazakii) protein is Cell division topological specificity factor.